The sequence spans 177 residues: Ribosome maturation factor RimM (177 aa).

The PRC barrel domain maps to 98–177 (DDGYYWKDLM…TIEVDWDPGF (80 aa)).

Belongs to the RimM family. As to quaternary structure, binds ribosomal protein uS19.

The protein localises to the cytoplasm. An accessory protein needed during the final step in the assembly of 30S ribosomal subunit, possibly for assembly of the head region. Essential for efficient processing of 16S rRNA. May be needed both before and after RbfA during the maturation of 16S rRNA. It has affinity for free ribosomal 30S subunits but not for 70S ribosomes. The protein is Ribosome maturation factor RimM of Enterobacter sp. (strain 638).